Reading from the N-terminus, the 183-residue chain is Apo-citrate lyase phosphoribosyl-dephospho-CoA transferase (183 aa).

The protein belongs to the CitX family.

It carries out the reaction apo-[citrate lyase ACP] + 2'-(5''-triphospho-alpha-D-ribosyl)-3'-dephospho-CoA = holo-[citrate lyase ACP] + diphosphate. Functionally, transfers 2-(5''-triphosphoribosyl)-3'-dephosphocoenzyme-A on a serine residue to the apo-acyl carrier protein (gamma chain) of the citrate lyase to yield holo-acyl carrier protein. The sequence is that of Apo-citrate lyase phosphoribosyl-dephospho-CoA transferase from Escherichia coli O9:H4 (strain HS).